A 341-amino-acid chain; its full sequence is uncharacterized protein (341 aa).

A disordered region spans residues 125 to 146 (DTVKHNGSGPRPEQASSHVHYS).

Belongs to the cycloisomerase 2 family.

This is an uncharacterized protein from Lactococcus lactis subsp. cremoris (strain MG1363).